A 363-amino-acid chain; its full sequence is Cytoplasmic tRNA 2-thiolation protein 1 (363 aa).

Residues 340–363 (ASLNGTPRTPPTPAEPVEGIERAA) are disordered.

This sequence belongs to the TtcA family. CTU1/NCS6/ATPBD3 subfamily.

The protein localises to the cytoplasm. It participates in tRNA modification; 5-methoxycarbonylmethyl-2-thiouridine-tRNA biosynthesis. Plays a central role in 2-thiolation of mcm(5)S(2)U at tRNA wobble positions of tRNA(Lys), tRNA(Glu) and tRNA(Gln). Directly binds tRNAs and probably acts by catalyzing adenylation of tRNAs, an intermediate required for 2-thiolation. It is unclear whether it acts as a sulfurtransferase that transfers sulfur from thiocarboxylated URM1 onto the uridine of tRNAs at wobble position. Prior mcm(5) tRNA modification by the elongator complex is required for 2-thiolation. May also be involved in protein urmylation. In Cryptococcus neoformans var. neoformans serotype D (strain B-3501A) (Filobasidiella neoformans), this protein is Cytoplasmic tRNA 2-thiolation protein 1.